Reading from the N-terminus, the 429-residue chain is Enolase (429 aa).

Residue Q167 participates in (2R)-2-phosphoglycerate binding. E209 serves as the catalytic Proton donor. Residues D246, E289, and D316 each coordinate Mg(2+). Positions 341, 370, 371, and 392 each coordinate (2R)-2-phosphoglycerate. Catalysis depends on K341, which acts as the Proton acceptor.

Belongs to the enolase family. Component of the RNA degradosome, a multiprotein complex involved in RNA processing and mRNA degradation. Requires Mg(2+) as cofactor.

It is found in the cytoplasm. It localises to the secreted. The protein resides in the cell surface. It catalyses the reaction (2R)-2-phosphoglycerate = phosphoenolpyruvate + H2O. It participates in carbohydrate degradation; glycolysis; pyruvate from D-glyceraldehyde 3-phosphate: step 4/5. Functionally, catalyzes the reversible conversion of 2-phosphoglycerate (2-PG) into phosphoenolpyruvate (PEP). It is essential for the degradation of carbohydrates via glycolysis. The chain is Enolase from Ectopseudomonas mendocina (strain ymp) (Pseudomonas mendocina).